Here is a 787-residue protein sequence, read N- to C-terminus: Endonuclease MutS2 (787 aa).

335–342 (GPNTGGKT) is a binding site for ATP. A Smr domain is found at 712-787 (LDLRGERYED…GLGNTVIELK (76 aa)).

This sequence belongs to the DNA mismatch repair MutS family. MutS2 subfamily. As to quaternary structure, homodimer. Binds to stalled ribosomes, contacting rRNA.

In terms of biological role, endonuclease that is involved in the suppression of homologous recombination and thus may have a key role in the control of bacterial genetic diversity. Acts as a ribosome collision sensor, splitting the ribosome into its 2 subunits. Detects stalled/collided 70S ribosomes which it binds and splits by an ATP-hydrolysis driven conformational change. Acts upstream of the ribosome quality control system (RQC), a ribosome-associated complex that mediates the extraction of incompletely synthesized nascent chains from stalled ribosomes and their subsequent degradation. Probably generates substrates for RQC. The chain is Endonuclease MutS2 from Shouchella clausii (strain KSM-K16) (Alkalihalobacillus clausii).